Here is a 1229-residue protein sequence, read N- to C-terminus: Vacuolar protein sorting-associated protein 8 homolog (1229 aa).

The segment at 67 to 89 is disordered; it reads EFGMPVPHATPTPSIGEDSTIRT. The stretch at 901 to 1063 is one CHCR repeat; it reads ETTRLLSLHY…ILPHQELQSI (163 aa). The RING-type; atypical zinc finger occupies 1148 to 1189; sequence CSMCRQRLYDHSQVLIFGGCGHGIHEQCMEESETQFEECPRC.

Belongs to the VPS8 family. As to quaternary structure, component of the class C core vacuole/endosome tethering (CORVET) complex composed of at least Vps8, dor/Vps18, car/Vps33A and Vps16A; unlike in other species, Vps11 is not part of the Drosophila complex. Due to the reduced number of components the Drosophila CORVET complex is often referred to as the miniCORVET complex. Has a higher affinity than the homotypic fusion and vacuole protein sorting (HOPS) tethering complex-specific component lt/Vps41 for Vps16A, car/Vps33A and dor/Vps18, the core components shared by both tethering complexes.

It localises to the early endosome. Its function is as follows. Part of the class C core vacuole/endosome tethering (CORVET) complex involved in endo-lysosomal vesicle trafficking and lysosome biogenesis by facilitating docking and fusion of endosomal vesicles. The CORVET complex acts upstream of the homotypic fusion and vacuole protein sorting (HOPS) tethering complex but is not involved in autophagic flux. The CORVET complex may cooperate with the early endosomal tether Rbsn-5 to mediate endosomal fusion. As part of the CORVET complex recruited to endosomes by activated GTP-bound Rab5. Specifically required for endocytic trafficking in a subset of cells, such as hemocytes and nephrocytes, which are highly active in endocytosis. The polypeptide is Vacuolar protein sorting-associated protein 8 homolog (Drosophila melanogaster (Fruit fly)).